The sequence spans 283 residues: Lectin-like protein At1g53080 (283 aa).

Residues 1–23 (MQIHKLCIFVLFISLLSSKTISA) form the signal peptide. The interval 24-277 (VKFNFNRFDG…RHDIWSWSFE (254 aa)) is legume-lectin like. Asparagine 84 and asparagine 138 each carry an N-linked (GlcNAc...) asparagine glycan. Position 247 is a phosphoserine (serine 247).

The protein belongs to the leguminous lectin family.

The protein resides in the secreted. It is found in the extracellular space. It localises to the apoplast. This is Lectin-like protein At1g53080 from Arabidopsis thaliana (Mouse-ear cress).